Reading from the N-terminus, the 66-residue chain is Photosystem II reaction center protein J (66 aa).

The segment at 1–27 is disordered; it reads MSGKKSGLPDGRVPDRNPDGTPAVPWK. A helical transmembrane segment spans residues 37–57; sequence LWLVATAGGMAVMFVVGLFFY.

Belongs to the PsbJ family. PSII is composed of 1 copy each of membrane proteins PsbA, PsbB, PsbC, PsbD, PsbE, PsbF, PsbH, PsbI, PsbJ, PsbK, PsbL, PsbM, PsbT, PsbX, PsbY, PsbZ, Psb30/Ycf12, peripheral proteins PsbO, CyanoQ (PsbQ), PsbU, PsbV and a large number of cofactors. It forms dimeric complexes.

It is found in the cellular thylakoid membrane. Functionally, one of the components of the core complex of photosystem II (PSII). PSII is a light-driven water:plastoquinone oxidoreductase that uses light energy to abstract electrons from H(2)O, generating O(2) and a proton gradient subsequently used for ATP formation. It consists of a core antenna complex that captures photons, and an electron transfer chain that converts photonic excitation into a charge separation. The sequence is that of Photosystem II reaction center protein J from Synechococcus sp. (strain RCC307).